The chain runs to 92 residues: Small ribosomal subunit protein uS19 (92 aa).

The protein belongs to the universal ribosomal protein uS19 family.

Its function is as follows. Protein S19 forms a complex with S13 that binds strongly to the 16S ribosomal RNA. In Bacillus thuringiensis subsp. konkukian (strain 97-27), this protein is Small ribosomal subunit protein uS19.